The sequence spans 326 residues: Adenosine receptor A1 (326 aa).

Topologically, residues 1–10 (MPPSISAFQA) are extracellular. Residues 11–33 (AYIGIEVLIALVSVPGNVLVIWA) traverse the membrane as a helical segment. At 34 to 46 (VKVNQALRDATFC) the chain is on the cytoplasmic side. The chain crosses the membrane as a helical span at residues 47 to 69 (FIVSLAVADVAVGALVIPLAILI). The Extracellular portion of the chain corresponds to 70 to 80 (NIGPQTYFHTC). Cysteines 80 and 169 form a disulfide. The chain crosses the membrane as a helical span at residues 81 to 102 (LMVACPVLILTQSSILALLAIA). At 103–123 (VDRYLRVKIPLRYKMVVTPRR) the chain is on the cytoplasmic side. The chain crosses the membrane as a helical span at residues 124–146 (AAVAIAGCWILSFVVGLTPMFGW). Residues 147-176 (NNLSAVERAWAANGSMGEPVIKCEFEKVIS) are Extracellular-facing. Asparagine 159 carries N-linked (GlcNAc...) asparagine glycosylation. A helical transmembrane segment spans residues 177 to 201 (MEYMVYFNFFVWVLPPLLLMVLIYL). The Cytoplasmic portion of the chain corresponds to 202-235 (EVFYLIRKQLNKKVSASSGDPQKYYGKELKIAKS). A helical membrane pass occupies residues 236–259 (LALILFLFALSWLPLHILNCITLF). Topologically, residues 260–267 (CPSCHKPS) are extracellular. Residues 268 to 292 (ILTYIAIFLTHGNSAMNPIVYAFRI) traverse the membrane as a helical segment. Topologically, residues 293 to 326 (QKFRVTFLKIWNDHFRCQPAPPIDEDLPEERPDD) are cytoplasmic. Residue cysteine 309 is the site of S-palmitoyl cysteine attachment.

The protein belongs to the G-protein coupled receptor 1 family.

It localises to the cell membrane. Its function is as follows. Receptor for adenosine. The activity of this receptor is mediated by G proteins which inhibit adenylyl cyclase. The protein is Adenosine receptor A1 (ADORA1) of Homo sapiens (Human).